We begin with the raw amino-acid sequence, 104 residues long: Translation initiation factor 1A (104 aa).

Positions 1-14 (MRGQQTPPQQPTRV) are enriched in low complexity. Positions 1–20 (MRGQQTPPQQPTRVRTPREN) are disordered. One can recognise an S1-like domain in the interval 12–87 (TRVRTPRENE…EKCDVIWRYT (76 aa)).

Belongs to the eIF-1A family.

Its function is as follows. Seems to be required for maximal rate of protein biosynthesis. Enhances ribosome dissociation into subunits and stabilizes the binding of the initiator Met-tRNA(I) to 40 S ribosomal subunits. The chain is Translation initiation factor 1A from Methanococcus maripaludis (strain DSM 14266 / JCM 13030 / NBRC 101832 / S2 / LL).